Reading from the N-terminus, the 137-residue chain is Peptide methionine sulfoxide reductase MsrB (137 aa).

A disordered region spans residues 1-33; it reads MSNNQDRPGQITDESLRERLSPEAYAVTRRAGT. The MsrB domain occupies 13–135; the sequence is DESLRERLSP…NSLSLDFKAA (123 aa). The Zn(2+) site is built by C52, C55, C101, and C104. C124 functions as the Nucleophile in the catalytic mechanism.

This sequence belongs to the MsrB Met sulfoxide reductase family. It depends on Zn(2+) as a cofactor.

It catalyses the reaction L-methionyl-[protein] + [thioredoxin]-disulfide + H2O = L-methionyl-(R)-S-oxide-[protein] + [thioredoxin]-dithiol. In Thioalkalivibrio sulfidiphilus (strain HL-EbGR7), this protein is Peptide methionine sulfoxide reductase MsrB.